The sequence spans 152 residues: uncharacterized protein (152 aa).

N-linked (GlcNAc...) asparagine; by host glycosylation occurs at N2. Transmembrane regions (helical) follow at residues 5–25 (MILL…MNLW), 36–56 (LNDF…CYIL), and 68–88 (LIIT…QAFI). The N-linked (GlcNAc...) asparagine; by host glycan is linked to N113.

The protein resides in the membrane. This is an uncharacterized protein from Acanthamoeba polyphaga mimivirus (APMV).